Here is a 149-residue protein sequence, read N- to C-terminus: Large ribosomal subunit protein bL9 (149 aa).

Belongs to the bacterial ribosomal protein bL9 family.

Binds to the 23S rRNA. The protein is Large ribosomal subunit protein bL9 of Thermotoga maritima (strain ATCC 43589 / DSM 3109 / JCM 10099 / NBRC 100826 / MSB8).